Reading from the N-terminus, the 580-residue chain is V-type proton ATPase catalytic subunit A (580 aa).

An ATP-binding site is contributed by Gly-209–Thr-216.

Belongs to the ATPase alpha/beta chains family. As to quaternary structure, V-ATPase is a heteromultimeric enzyme composed of a peripheral catalytic V1 complex (main components: subunits A, B, C, D, E, and F) attached to an integral membrane V0 proton pore complex (main component: the proteolipid protein).

It carries out the reaction ATP + H2O + 4 H(+)(in) = ADP + phosphate + 5 H(+)(out). In terms of biological role, catalytic subunit of the peripheral V1 complex of vacuolar ATPase. V-ATPase vacuolar ATPase is responsible for acidifying a variety of intracellular compartments in eukaryotic cells. This chain is V-type proton ATPase catalytic subunit A, found in Hordeum vulgare (Barley).